Consider the following 699-residue polypeptide: Endogenous retrovirus group K member 113 Env polyprotein (699 aa).

Positions 1–47 (MNPSEMQRKAPPRRRRHRNRAPLTHKMNKMVTSEEQMKLPSTKKAEP) are disordered. The signal sequence occupies residues 1-89 (MNPSEMQRKA…ALMIVSMVVS (89 aa)). The span at 10–20 (APPRRRRHRNR) shows a compositional bias: basic residues. The Extracellular portion of the chain corresponds to 90 to 632 (LPMPAGAAAA…NLNPVTWVKT (543 aa)). 7 N-linked (GlcNAc...) asparagine glycosylation sites follow: N100, N128, N153, N274, N355, N372, and N461. Positions 466–486 (FIFTLIAVIMGLIAVTATAAV) are fusion peptide. N-linked (GlcNAc...) asparagine glycans are attached at residues N507, N554, N566, and N585. A helical transmembrane segment spans residues 633–653 (IGSTTIINLILILVCLFCLLL). Residues 654–699 (VCRCTQQLRRDSDHRERAMMTMAVLSKRKGGNVGKSKRDQIVTVSV) lie on the Cytoplasmic side of the membrane.

It belongs to the beta type-B retroviral envelope protein family. HERV class-II K(HML-2) env subfamily. In terms of assembly, the surface (SU) and transmembrane (TM) proteins form a heterodimer. SU and TM are attached by noncovalent interactions or by a labile interchain disulfide bond. In terms of processing, specific enzymatic cleavages in vivo yield the mature SU and TM proteins.

It is found in the cell membrane. The protein resides in the virion. Retroviral envelope proteins mediate receptor recognition and membrane fusion during early infection. Endogenous envelope proteins may have kept, lost or modified their original function during evolution. This endogenous envelope protein has lost its original fusogenic properties. In terms of biological role, SU mediates receptor recognition. Functionally, TM anchors the envelope heterodimer to the viral membrane through one transmembrane domain. The other hydrophobic domain, called fusion peptide, mediates fusion of the viral membrane with the target cell membrane. In Homo sapiens (Human), this protein is Endogenous retrovirus group K member 113 Env polyprotein (HERVK_113).